A 587-amino-acid chain; its full sequence is 5-aminolevulinate synthase, erythroid-specific, mitochondrial (587 aa).

Residues 1-49 (MVAAAMLLRSCPVLSKGPTGLLGKVAKTYQFLFGIGRCPILATQGPTCS) constitute a mitochondrion transit peptide. Succinyl-CoA is bound at residue R163. Pyridoxal 5'-phosphate-binding residues include C258 and F259. Positions 280 and 299 each coordinate succinyl-CoA. Pyridoxal 5'-phosphate is bound by residues S332, H360, and T388. Residue K391 is part of the active site. K391 is subject to N6-(pyridoxal phosphate)lysine. The pyridoxal 5'-phosphate site is built by T420 and T421. Position 508 (T508) interacts with succinyl-CoA.

This sequence belongs to the class-II pyridoxal-phosphate-dependent aminotransferase family. In terms of assembly, homodimer. Interacts with SUCLA2. Requires pyridoxal 5'-phosphate as cofactor. As to expression, erythroid-specific.

It is found in the mitochondrion inner membrane. It catalyses the reaction succinyl-CoA + glycine + H(+) = 5-aminolevulinate + CO2 + CoA. The protein operates within porphyrin-containing compound metabolism; protoporphyrin-IX biosynthesis; 5-aminolevulinate from glycine: step 1/1. Its function is as follows. Catalyzes the pyridoxal 5'-phosphate (PLP)-dependent condensation of succinyl-CoA and glycine to form aminolevulinic acid (ALA), with CoA and CO2 as by-products. Contributes significantly to heme formation during erythropoiesis. The protein is 5-aminolevulinate synthase, erythroid-specific, mitochondrial (Alas2) of Rattus norvegicus (Rat).